Consider the following 594-residue polypeptide: Aspartate--tRNA(Asp/Asn) ligase (594 aa).

E175 lines the L-aspartate pocket. The aspartate stretch occupies residues 199-202 (QQLK). R221 lines the L-aspartate pocket. ATP is bound by residues 221–223 (RDE) and Q230. H450 lines the L-aspartate pocket. E485 serves as a coordination point for ATP. R492 contributes to the L-aspartate binding site. Residue 537-540 (GIDR) coordinates ATP.

It belongs to the class-II aminoacyl-tRNA synthetase family. Type 1 subfamily. As to quaternary structure, homodimer.

The protein localises to the cytoplasm. The catalysed reaction is tRNA(Asx) + L-aspartate + ATP = L-aspartyl-tRNA(Asx) + AMP + diphosphate. Its function is as follows. Aspartyl-tRNA synthetase with relaxed tRNA specificity since it is able to aspartylate not only its cognate tRNA(Asp) but also tRNA(Asn). Reaction proceeds in two steps: L-aspartate is first activated by ATP to form Asp-AMP and then transferred to the acceptor end of tRNA(Asp/Asn). This chain is Aspartate--tRNA(Asp/Asn) ligase, found in Herpetosiphon aurantiacus (strain ATCC 23779 / DSM 785 / 114-95).